The chain runs to 97 residues: Aspartyl/glutamyl-tRNA(Asn/Gln) amidotransferase subunit C (97 aa).

The protein belongs to the GatC family. As to quaternary structure, heterotrimer of A, B and C subunits.

It carries out the reaction L-glutamyl-tRNA(Gln) + L-glutamine + ATP + H2O = L-glutaminyl-tRNA(Gln) + L-glutamate + ADP + phosphate + H(+). The enzyme catalyses L-aspartyl-tRNA(Asn) + L-glutamine + ATP + H2O = L-asparaginyl-tRNA(Asn) + L-glutamate + ADP + phosphate + 2 H(+). Allows the formation of correctly charged Asn-tRNA(Asn) or Gln-tRNA(Gln) through the transamidation of misacylated Asp-tRNA(Asn) or Glu-tRNA(Gln) in organisms which lack either or both of asparaginyl-tRNA or glutaminyl-tRNA synthetases. The reaction takes place in the presence of glutamine and ATP through an activated phospho-Asp-tRNA(Asn) or phospho-Glu-tRNA(Gln). The protein is Aspartyl/glutamyl-tRNA(Asn/Gln) amidotransferase subunit C of Prochlorococcus marinus (strain SARG / CCMP1375 / SS120).